A 66-amino-acid chain; its full sequence is UPF0370 protein YpfN (66 aa).

The chain crosses the membrane as a helical span at residues 4 to 24 (LAKYWWILVLVFLVGVLLNVI). The tract at residues 39–66 (KPELPPHRDFNDKWDDEDDWPKKDQSKK) is disordered. A compositionally biased stretch (basic and acidic residues) spans 42 to 51 (LPPHRDFNDK).

This sequence belongs to the UPF0370 family.

Its subcellular location is the cell membrane. The protein is UPF0370 protein YpfN of Salmonella arizonae (strain ATCC BAA-731 / CDC346-86 / RSK2980).